We begin with the raw amino-acid sequence, 194 residues long: INO80 complex subunit 4 (194 aa).

2 disordered regions span residues 24-107 (KEKQ…NSGL) and 170-194 (STHA…ATGI). Composition is skewed to polar residues over residues 28-38 (NFTASPSSQPK) and 82-97 (SKPS…SAPK). A Phosphoserine modification is found at S86. The residue at position 90 (T90) is a Phosphothreonine.

Component of the INO80 chromatin remodeling complex.

Its subcellular location is the cytoplasm. It localises to the nucleus. Functionally, component of the INO80 complex which remodels chromatin by shifting nucleosomes and is involved in DNA repair. The sequence is that of INO80 complex subunit 4 (ies4) from Schizosaccharomyces pombe (strain 972 / ATCC 24843) (Fission yeast).